A 340-amino-acid chain; its full sequence is Dihydroorotate dehydrogenase (quinone) (340 aa).

Residues 62-66 (AGLDK) and Thr86 each bind FMN. Lys66 contacts substrate. 111-115 (NRMGF) contacts substrate. Residues Asn139 and Asn172 each contribute to the FMN site. Asn172 serves as a coordination point for substrate. Residue Ser175 is the Nucleophile of the active site. Asn177 is a substrate binding site. The FMN site is built by Lys217 and Thr245. Residue 246–247 (NT) participates in substrate binding. FMN-binding positions include Gly268, Gly297, and 318-319 (YS).

The protein belongs to the dihydroorotate dehydrogenase family. Type 2 subfamily. Monomer. Requires FMN as cofactor.

The protein resides in the cell membrane. It catalyses the reaction (S)-dihydroorotate + a quinone = orotate + a quinol. It participates in pyrimidine metabolism; UMP biosynthesis via de novo pathway; orotate from (S)-dihydroorotate (quinone route): step 1/1. In terms of biological role, catalyzes the conversion of dihydroorotate to orotate with quinone as electron acceptor. The chain is Dihydroorotate dehydrogenase (quinone) from Alkalilimnicola ehrlichii (strain ATCC BAA-1101 / DSM 17681 / MLHE-1).